Consider the following 739-residue polypeptide: Phosphoribosylformylglycinamidine synthase subunit PurL (739 aa).

His-54 is an active-site residue. ATP contacts are provided by Tyr-57 and Lys-96. Glu-98 contributes to the Mg(2+) binding site. Substrate contacts are provided by residues 99–102 (SHNH) and Arg-121. The active-site Proton acceptor is the His-100. Residue Asp-122 participates in Mg(2+) binding. Gln-245 is a binding site for substrate. Mg(2+) is bound at residue Asp-273. 317–319 (ESQ) is a binding site for substrate. Residues Asp-500 and Gly-537 each coordinate ATP. Position 538 (Asn-538) interacts with Mg(2+). Ser-540 is a substrate binding site.

This sequence belongs to the FGAMS family. In terms of assembly, monomer. Part of the FGAM synthase complex composed of 1 PurL, 1 PurQ and 2 PurS subunits.

It is found in the cytoplasm. It catalyses the reaction N(2)-formyl-N(1)-(5-phospho-beta-D-ribosyl)glycinamide + L-glutamine + ATP + H2O = 2-formamido-N(1)-(5-O-phospho-beta-D-ribosyl)acetamidine + L-glutamate + ADP + phosphate + H(+). It functions in the pathway purine metabolism; IMP biosynthesis via de novo pathway; 5-amino-1-(5-phospho-D-ribosyl)imidazole from N(2)-formyl-N(1)-(5-phospho-D-ribosyl)glycinamide: step 1/2. Its function is as follows. Part of the phosphoribosylformylglycinamidine synthase complex involved in the purines biosynthetic pathway. Catalyzes the ATP-dependent conversion of formylglycinamide ribonucleotide (FGAR) and glutamine to yield formylglycinamidine ribonucleotide (FGAM) and glutamate. The FGAM synthase complex is composed of three subunits. PurQ produces an ammonia molecule by converting glutamine to glutamate. PurL transfers the ammonia molecule to FGAR to form FGAM in an ATP-dependent manner. PurS interacts with PurQ and PurL and is thought to assist in the transfer of the ammonia molecule from PurQ to PurL. This chain is Phosphoribosylformylglycinamidine synthase subunit PurL, found in Bacillus mycoides (strain KBAB4) (Bacillus weihenstephanensis).